Here is a 528-residue protein sequence, read N- to C-terminus: uncharacterized protein (528 aa).

This is an uncharacterized protein from Giardia intestinalis (Giardia lamblia).